A 216-amino-acid polypeptide reads, in one-letter code: Cyclic AMP receptor protein (216 aa).

6–126 lines the a nucleoside 3',5'-cyclic phosphate pocket; it reads LFHGLAPEEV…HNLAALLARR (121 aa). Residues 75 to 78 and 85 to 86 contribute to the 3',5'-cyclic AMP site; these read GEMS and RS. Residues 140–206 enclose the HTH crp-type domain; sequence EEARNRVAYA…PGTVEVREAA (67 aa). Positions 166–185 form a DNA-binding region, H-T-H motif; sequence HHELAALAGTSRETVSRVLH.

As to quaternary structure, homodimer.

Functionally, activates transcription. Positively regulates six promoters upstream of the TTHB186, TTHB147, TTHB178, TTHB159, TTHA0771 and TTHA0176 genes in a cAMP-dependent manner. Regulated genes include clustered regularly interspaced short palindromic repeat (CRISPR) associated (Cas) genes, and the genes encoding a putative transcriptional regulator, a protein containing the exonuclease III-like domain of DNA polymerase, a GCN5-related acetyltransferase homolog, and some T.thermophilus-specific proteins of unknown function. The consensus DNA-binding site of this transcriptional regulator is 5'-(CT)NNG(G/T)(G/T)C(A/C)N(A/T)NNTCACAN(G/C)(G/C)-3' in which N is G, A, T or C. This is Cyclic AMP receptor protein from Thermus thermophilus (strain ATCC 27634 / DSM 579 / HB8).